The primary structure comprises 733 residues: Polyribonucleotide nucleotidyltransferase (733 aa).

Residues Asp489 and Asp495 each contribute to the Mg(2+) site. One can recognise a KH domain in the interval 556 to 615 (PKIDTIKIDVDKIKIVIGKGGETIDKIIAETGVKIDIDEEGNVSIYSSDQDAINRAKEII). In terms of domain architecture, S1 motif spans 625–693 (DEVYHAKVVR…AKGRVDASMK (69 aa)). The segment at 691 to 733 (SMKVLLPRPPKSDKPKHHHDKGHHPHKEYKGHKDHQESPKTEE) is disordered. Over residues 704–723 (KPKHHHDKGHHPHKEYKGHK) the composition is skewed to basic residues. Residues 724-733 (DHQESPKTEE) show a composition bias toward basic and acidic residues.

It belongs to the polyribonucleotide nucleotidyltransferase family. Requires Mg(2+) as cofactor.

The protein localises to the cytoplasm. It catalyses the reaction RNA(n+1) + phosphate = RNA(n) + a ribonucleoside 5'-diphosphate. Functionally, involved in mRNA degradation. Catalyzes the phosphorolysis of single-stranded polyribonucleotides processively in the 3'- to 5'-direction. In Streptococcus sanguinis (strain SK36), this protein is Polyribonucleotide nucleotidyltransferase.